Here is a 288-residue protein sequence, read N- to C-terminus: CBY1-interacting BAR domain-containing protein 1 (288 aa).

Residues 1-47 (MLRRSLENRDAQTRQLQDAVTNVEKHFGELCQIFAAYVRKTARLRDK) constitute a mitochondrion transit peptide. The segment at 10 to 220 (DAQTRQLQDA…KIDEEEDLEV (211 aa)) is BAR-like. Positions 107–176 (KMKRDDLKAT…ETIDNFEKQK (70 aa)) form a coiled coil. The segment at 266–288 (RKDHQTEDDDEEDEDLDVTEEEN) is disordered. The span at 271-288 (TEDDDEEDEDLDVTEEEN) shows a compositional bias: acidic residues.

The protein belongs to the CIBAR family. In terms of assembly, homodimer (via BAR-like domain). Heterodimer with FAM92B (via BAR-like domains). Interacts (via BAR-like domain) with CBY1; this interaction is required for targeting FAM92A to centriole and cilium basal body. Interacts (via BAR-like domain) with CBY3; both proteins form a ninefold symmetric structure at the flagellar base; are recruited to the annulus in a mutually dependent manner and regulate annulus positionning.

The protein resides in the cytoplasm. It is found in the cytoskeleton. Its subcellular location is the microtubule organizing center. The protein localises to the centrosome. It localises to the centriole. The protein resides in the cilium basal body. It is found in the cell projection. Its subcellular location is the cilium. The protein localises to the nucleus. It localises to the mitochondrion inner membrane. The protein resides in the flagellum. Functionally, plays a critical role in regulating mitochondrial ultrastructure and function by maintaining the integrity of mitochondrial morphology, particularly the organization of cristae. Preferentially binds to negatively charged phospholipids like cardiolipin and phosphatidylinositol 4,5-bisphosphate enhancing its interaction with mitochondrial membranes. Induces membrane curvature and tubulation, which are critical for maintaining mitochondrial ultrastructure and the organization of cristae. Plays a crucial role in ciliogenesis. May play a role in limb development through its role in ciliogenesis. Plays a key role in the correct positioning of the annulus, a septin-based ring structure in the sperm flagellum, serving both as a physical barrier and a membrane diffusion barrier that separates the midpiece (MP) from the principal piece (PP). This positioning is essential for proper sperm motility and function. Interacts with CBY3 to form a complex which localizes to the curved membrane region of the flagellar pocket. By doing so, may provide stability and rigidity to the periannular membrane to prevent membrane deformation. This function is crucial for halting annulus migration at the proximal end of the fibrous sheath-containing PP. The polypeptide is CBY1-interacting BAR domain-containing protein 1 (Bos taurus (Bovine)).